A 738-amino-acid chain; its full sequence is 1,4-alpha-glucan branching enzyme GlgB (738 aa).

The Nucleophile role is filled by Asp-399. The active-site Proton donor is the Glu-452.

It belongs to the glycosyl hydrolase 13 family. GlgB subfamily. In terms of assembly, monomer.

It carries out the reaction Transfers a segment of a (1-&gt;4)-alpha-D-glucan chain to a primary hydroxy group in a similar glucan chain.. Its pathway is glycan biosynthesis; glycogen biosynthesis. Functionally, catalyzes the formation of the alpha-1,6-glucosidic linkages in glycogen by scission of a 1,4-alpha-linked oligosaccharide from growing alpha-1,4-glucan chains and the subsequent attachment of the oligosaccharide to the alpha-1,6 position. The chain is 1,4-alpha-glucan branching enzyme GlgB from Chlamydia trachomatis serovar A (strain ATCC VR-571B / DSM 19440 / HAR-13).